A 160-amino-acid chain; its full sequence is Dysbindin domain-containing protein 1 (160 aa).

2 disordered regions span residues 1–34 and 95–160; these read MESP…GDTC and ADSD…PKED. 3 positions are modified to phosphoserine: Ser-3, Ser-97, and Ser-121. A compositionally biased stretch (basic and acidic residues) spans 127-143; the sequence is TRAEQNREKQTPSDPER.

The protein belongs to the dysbindin family.

The chain is Dysbindin domain-containing protein 1 (Dbndd1) from Rattus norvegicus (Rat).